Consider the following 459-residue polypeptide: UDP-N-acetylmuramate--L-alanine ligase (459 aa).

Residue 113-119 (GSHGKTT) coordinates ATP.

Belongs to the MurCDEF family.

It localises to the cytoplasm. The catalysed reaction is UDP-N-acetyl-alpha-D-muramate + L-alanine + ATP = UDP-N-acetyl-alpha-D-muramoyl-L-alanine + ADP + phosphate + H(+). Its pathway is cell wall biogenesis; peptidoglycan biosynthesis. Cell wall formation. This chain is UDP-N-acetylmuramate--L-alanine ligase, found in Persephonella marina (strain DSM 14350 / EX-H1).